Reading from the N-terminus, the 405-residue chain is Deoxyguanosinetriphosphate triphosphohydrolase-like protein (405 aa).

The HD domain maps to 75-219; it reads RLTHTIEVAQ…AAIADDIAYN (145 aa).

This sequence belongs to the dGTPase family. Type 2 subfamily.

This chain is Deoxyguanosinetriphosphate triphosphohydrolase-like protein, found in Rhizobium meliloti (strain 1021) (Ensifer meliloti).